The sequence spans 96 residues: uncharacterized protein (96 aa).

The helical transmembrane segment at 1 to 21 threads the bilayer; sequence MSDFEIIVGISSLLQVIILNI.

Its subcellular location is the membrane. This is an uncharacterized protein from Saccharomyces cerevisiae (strain ATCC 204508 / S288c) (Baker's yeast).